A 444-amino-acid chain; its full sequence is Protein kinase C and casein kinase substrate in neurons protein 1 (444 aa).

Phosphoserine occurs at positions 2 and 79. An F-BAR domain is found at 13 to 283 (EETTDSFWEV…AIRGADAQED (271 aa)). A coiled-coil region spans residues 26–275 (KRTVKRIDDG…HVYRELEQAI (250 aa)). Disordered stretches follow at residues 175–194 (MNSK…LQDK) and 309–386 (LPHT…DDSK). At Thr-184 the chain carries Phosphothreonine. Over residues 314–324 (TKKEKQPKKAE) the composition is skewed to basic and acidic residues. Positions 329 to 351 (TNATGAVESTSQAGDRGSVSSYD) are enriched in polar residues. A phosphoserine mark is found at Ser-346, Ser-348, Ser-349, Ser-361, and Ser-365. The SH3 domain maps to 385-444 (SKGVRVRALYDYDGQEQDELSFKAGDELTKLGEEDEQGWCRGRLDSGQLGLYPANYVEAI). Position 394 is a phosphotyrosine (Tyr-394). Residues Ser-405 and Ser-430 each carry the phosphoserine modification.

The protein belongs to the PACSIN family. As to quaternary structure, may form heterooligomers with other PACSINs. Interacts with MAPT. Interacts with TRPV4. Interacts (via SH3 domain) with SYNJ1 and WASL. Interacts with DNM2 and DNM3. Interacts with both COBL and DBNL. Identified in a complex composed of COBL, PACSIN1 and WASL. Interacts with EHD1 and EHD3. Homodimer. Interacts (via SH3 domain) with DNM1; the interaction is reduced by DNM1 phosphorylation. Post-translationally, phosphorylated by casein kinase 2 (CK2) and protein kinase C (PKC). In terms of tissue distribution, highly expressed in brain and, at much lower levels, in heart and pancreas.

It is found in the cytoplasm. Its subcellular location is the cell projection. The protein resides in the synapse. It localises to the synaptosome. The protein localises to the ruffle membrane. It is found in the membrane. Its subcellular location is the cytoplasmic vesicle membrane. The protein resides in the cytosol. It localises to the cell membrane. In terms of biological role, plays a role in the reorganization of the microtubule cytoskeleton via its interaction with MAPT; this decreases microtubule stability and inhibits MAPT-induced microtubule polymerization. Plays a role in cellular transport processes by recruiting DNM1, DNM2 and DNM3 to membranes. Plays a role in the reorganization of the actin cytoskeleton and in neuron morphogenesis via its interaction with COBL and WASL, and by recruiting COBL to the cell cortex. Plays a role in the regulation of neurite formation, neurite branching and the regulation of neurite length. Required for normal synaptic vesicle endocytosis; this process retrieves previously released neurotransmitters to accommodate multiple cycles of neurotransmission. Required for normal excitatory and inhibitory synaptic transmission. Binds to membranes via its F-BAR domain and mediates membrane tubulation. The chain is Protein kinase C and casein kinase substrate in neurons protein 1 (PACSIN1) from Homo sapiens (Human).